The following is a 150-amino-acid chain: 3-dehydroquinate dehydratase (150 aa).

Tyrosine 26 serves as the catalytic Proton acceptor. The substrate site is built by asparagine 77, histidine 83, and aspartate 90. Residue histidine 103 is the Proton donor of the active site. Substrate contacts are provided by residues 104–105 (LS) and arginine 114.

Belongs to the type-II 3-dehydroquinase family. Homododecamer.

The enzyme catalyses 3-dehydroquinate = 3-dehydroshikimate + H2O. It participates in metabolic intermediate biosynthesis; chorismate biosynthesis; chorismate from D-erythrose 4-phosphate and phosphoenolpyruvate: step 3/7. In terms of biological role, catalyzes a trans-dehydration via an enolate intermediate. The protein is 3-dehydroquinate dehydratase of Yersinia enterocolitica serotype O:8 / biotype 1B (strain NCTC 13174 / 8081).